The primary structure comprises 501 residues: Arabinose import ATP-binding protein AraG (501 aa).

ABC transporter domains follow at residues 4-239 and 252-495; these read LEFN…MVGR and LGDN…LPDK. 36–43 serves as a coordination point for ATP; the sequence is GENGAGKS.

Belongs to the ABC transporter superfamily. Arabinose importer (TC 3.A.1.2.2) family. In terms of assembly, the complex is composed of two ATP-binding proteins (AraG), two transmembrane proteins (AraH) and a solute-binding protein (AraF).

Its subcellular location is the cell inner membrane. It catalyses the reaction L-arabinose(out) + ATP + H2O = L-arabinose(in) + ADP + phosphate + H(+). Its function is as follows. Part of the ABC transporter complex AraFGH involved in arabinose import. Responsible for energy coupling to the transport system. This Rhizobium etli (strain ATCC 51251 / DSM 11541 / JCM 21823 / NBRC 15573 / CFN 42) protein is Arabinose import ATP-binding protein AraG.